A 263-amino-acid chain; its full sequence is H-2 class II histocompatibility antigen, A-S beta chain (263 aa).

The N-terminal stretch at 1–27 (MALQIPSLLLSAAVVVLMVLSSPGTEG) is a signal peptide. The tract at residues 28–120 (GDSERHFVFQ…VETHTSLRRL (93 aa)) is beta-1. The Extracellular portion of the chain corresponds to 28 to 224 (GDSERHFVFQ…RAQSESARSK (197 aa)). 2 cysteine pairs are disulfide-bonded: C42–C104 and C143–C199. N46 carries an N-linked (GlcNAc...) asparagine glycan. The tract at residues 121–214 (EQPNVVISLS…SLKSPITVEW (94 aa)) is beta-2. Residues 123–211 (PNVVISLSRT…EHPSLKSPIT (89 aa)) enclose the Ig-like C1-type domain. Residues 215–224 (RAQSESARSK) form a connecting peptide region. The helical transmembrane segment at 225–245 (MLSGIGGCVLGVIFLGLGLFI) threads the bilayer. Residues 246–263 (RHRSQKGPRGPPPAGLLQ) lie on the Cytoplasmic side of the membrane.

This sequence belongs to the MHC class II family. Ubiquitinated in immature dendritic cells leading to down-regulation of MHC class II.

The protein resides in the membrane. The chain is H-2 class II histocompatibility antigen, A-S beta chain (H2-Ab1) from Mus musculus (Mouse).